Reading from the N-terminus, the 398-residue chain is Succinate--CoA ligase [ADP-forming] subunit beta (398 aa).

The region spanning 9–253 (KQVLAKYGVA…ESEEDPAELE (245 aa)) is the ATP-grasp domain. ATP-binding positions include lysine 46, 53–55 (GRG), glutamate 108, cysteine 111, and glutamate 116. Mg(2+) is bound by residues asparagine 208 and aspartate 222. Residues asparagine 273 and 330–332 (GIM) each bind substrate.

The protein belongs to the succinate/malate CoA ligase beta subunit family. As to quaternary structure, heterotetramer of two alpha and two beta subunits. The cofactor is Mg(2+).

The enzyme catalyses succinate + ATP + CoA = succinyl-CoA + ADP + phosphate. It catalyses the reaction GTP + succinate + CoA = succinyl-CoA + GDP + phosphate. It participates in carbohydrate metabolism; tricarboxylic acid cycle; succinate from succinyl-CoA (ligase route): step 1/1. Its function is as follows. Succinyl-CoA synthetase functions in the citric acid cycle (TCA), coupling the hydrolysis of succinyl-CoA to the synthesis of either ATP or GTP and thus represents the only step of substrate-level phosphorylation in the TCA. The beta subunit provides nucleotide specificity of the enzyme and binds the substrate succinate, while the binding sites for coenzyme A and phosphate are found in the alpha subunit. This chain is Succinate--CoA ligase [ADP-forming] subunit beta, found in Paramagnetospirillum magneticum (strain ATCC 700264 / AMB-1) (Magnetospirillum magneticum).